A 930-amino-acid polypeptide reads, in one-letter code: Translation initiation factor IF-2 (930 aa).

Low complexity predominate over residues 50–67 (FKPAAAPKVEAKPAAPKV). Disordered regions lie at residues 50–195 (FKPA…PRID) and 260–346 (EVVP…HELP). Composition is skewed to basic and acidic residues over residues 68–90 (SAEKKTEKSEPAKPAVAKEEAKP) and 110–125 (FKAEREARAKEQAERR). Positions 129–141 (KGNNRDQQQNGNR) are enriched in low complexity. Composition is skewed to basic and acidic residues over residues 157–167 (RDNRRFNDQAK) and 262–295 (VPEKKEPAVDTRRKKQARPDKNRDDYDHEEDGPR). Residues 309-318 (NQKNSNWNNN) show a composition bias toward low complexity. Residues 337–346 (VTERKFHELP) show a composition bias toward basic and acidic residues. The 168-residue stretch at 432-599 (ERPPVVTIMG…TVLLVAEIQE (168 aa)) folds into the tr-type G domain. Residues 441-448 (GHVDHGKT) form a G1 region. A GTP-binding site is contributed by 441–448 (GHVDHGKT). The interval 466 to 470 (GITQH) is G2. The tract at residues 487-490 (DTPG) is G3. Residues 487–491 (DTPGH) and 541–544 (NKID) each bind GTP. Positions 541 to 544 (NKID) are G4. Residues 577–579 (SAK) are G5.

It belongs to the TRAFAC class translation factor GTPase superfamily. Classic translation factor GTPase family. IF-2 subfamily.

Its subcellular location is the cytoplasm. Functionally, one of the essential components for the initiation of protein synthesis. Protects formylmethionyl-tRNA from spontaneous hydrolysis and promotes its binding to the 30S ribosomal subunits. Also involved in the hydrolysis of GTP during the formation of the 70S ribosomal complex. The sequence is that of Translation initiation factor IF-2 from Streptococcus pneumoniae (strain Hungary19A-6).